Reading from the N-terminus, the 177-residue chain is Interleukin-1 receptor antagonist protein (177 aa).

The first 25 residues, 1-25, serve as a signal peptide directing secretion; it reads MEICRGLRSHLITLLLFLFHSETIC. C91 and C141 are disulfide-bonded. Residue N109 is glycosylated (N-linked (GlcNAc...) asparagine).

Belongs to the IL-1 family. The intracellular form of IL1RN is predominantly expressed in epithelial cells.

Its subcellular location is the secreted. The protein resides in the cytoplasm. In terms of biological role, anti-inflammatory antagonist of interleukin-1 family of proinflammatory cytokines such as interleukin-1beta/IL1B and interleukin-1alpha/IL1A. Protects from immune dysregulation and uncontrolled systemic inflammation triggered by IL1 for a range of innate stimulatory agents such as pathogens. This is Interleukin-1 receptor antagonist protein (IL1RN) from Homo sapiens (Human).